The following is a 567-amino-acid chain: Proton-coupled zinc antiporter SLC30A9, mitochondrial (567 aa).

5 consecutive transmembrane segments (helical) span residues 238 to 258, 313 to 333, 341 to 361, 391 to 411, and 423 to 443; these read VVMVAICINGLNCFFKFLAWI, GVGIFMMGAGLSWYHGIMGLL, LLWAYCILAGSLVSEGATLLV, VILLEDTAAVLGVIIAATCMG, and SLGSLGVGTLLGVVSAFLIYT. An LXXLL motif motif is present at residues 461 to 465; sequence LTELL.

Belongs to the cation diffusion facilitator (CDF) transporter (TC 2.A.4) family. SLC30A subfamily. In terms of assembly, interacts with GRIP1, ESR1, AR and CTNNB1.

Its subcellular location is the mitochondrion membrane. The protein localises to the nucleus. It localises to the endoplasmic reticulum. The enzyme catalyses Zn(2+)(in) + 2 H(+)(out) = Zn(2+)(out) + 2 H(+)(in). Acts as a zinc transporter involved in intracellular zinc homeostasis. Functions as a secondary coactivator for nuclear receptors by cooperating with p160 coactivators subtypes. Plays a role in transcriptional activation of Wnt-responsive genes. In terms of biological role, mitochondrial proton-coupled zinc ion antiporter mediating the export of zinc from the mitochondria and involved in zinc homeostasis, zinc mobilization as well as mitochondrial morphology and health. In nucleus, functions as a secondary coactivator for nuclear receptors by cooperating with p160 coactivators subtypes. Plays a role in transcriptional activation of Wnt-responsive genes. This Mus musculus (Mouse) protein is Proton-coupled zinc antiporter SLC30A9, mitochondrial (Slc30a9).